We begin with the raw amino-acid sequence, 206 residues long: Guanylate kinase (206 aa).

The 181-residue stretch at 3-183 folds into the Guanylate kinase-like domain; that stretch reads GNLYILSAPS…ALTELKSILT (181 aa). 10-17 lines the ATP pocket; that stretch reads APSGAGKS.

It belongs to the guanylate kinase family.

It localises to the cytoplasm. It catalyses the reaction GMP + ATP = GDP + ADP. Essential for recycling GMP and indirectly, cGMP. The protein is Guanylate kinase of Haemophilus ducreyi (strain 35000HP / ATCC 700724).